The chain runs to 218 residues: Cytochrome b6 (218 aa).

The chain crosses the membrane as a helical span at residues 35 to 55 (IFYCLGGITLVCFLIQFATGF). Position 38 (Cys38) interacts with heme c. Heme b is bound by residues His89 and His103. 3 helical membrane passes run 93–113 (ASMM…TGGF), 119–139 (LTWV…VTGY), and 189–209 (LHTF…FLMI). The heme b site is built by His190 and His205.

The protein belongs to the cytochrome b family. PetB subfamily. In terms of assembly, the 4 large subunits of the cytochrome b6-f complex are cytochrome b6, subunit IV (17 kDa polypeptide, PetD), cytochrome f and the Rieske protein, while the 4 small subunits are PetG, PetL, PetM and PetN. The complex functions as a dimer. It depends on heme b as a cofactor. Heme c is required as a cofactor.

Its subcellular location is the cellular thylakoid membrane. Functionally, component of the cytochrome b6-f complex, which mediates electron transfer between photosystem II (PSII) and photosystem I (PSI), cyclic electron flow around PSI, and state transitions. This is Cytochrome b6 from Synechococcus sp. (strain CC9311).